A 639-amino-acid polypeptide reads, in one-letter code: Protein sly1 (639 aa).

The protein belongs to the STXBP/unc-18/SEC1 family.

It is found in the cytoplasm. This Schizosaccharomyces pombe (strain 972 / ATCC 24843) (Fission yeast) protein is Protein sly1 (sly1).